A 633-amino-acid polypeptide reads, in one-letter code: CDK5 and ABL1 enzyme substrate 1 (633 aa).

Residues M1–Q29 show a composition bias toward low complexity. The tract at residues M1–G99 is disordered. Residues M1–S109 are interaction with TDRD7. A compositionally biased stretch (basic and acidic residues) spans P51–R61. Phosphoserine occurs at positions 168 and 287. The tract at residues Q179–S492 is interaction with CDK3. A Phosphoserine; by CDK2 and CDK3 modification is found at S313. The residue at position 415 (T415) is a Phosphothreonine.

This sequence belongs to the cyclin family. In terms of assembly, found in a complex with p53/TP53. Found in a number of complexes with CDK2, CDK3, CDK5, ABL1, TDRD7, CDK17, CCNA1, CCNE1 and TP73. Interacts with CDK2, CDK3, CDK5, ABL1 and TDRD7. Post-translationally, phosphorylated on Ser-313 by CCNE1/CDK3. Phosphorylated on serine/threonine residues by CDK5 and on tyrosine residues by ABL1. Also phosphorylated in vitro by CCNA1/CDK2, CCNE1/CDK2, CCNA1/CDK3 and CCNE1/CDK3. Expressed in breast, pancreas, colon, head and neck (at protein level). Strongly decreased in more than half of cases of atypical endometrial hyperplasia and in more than 90% of endometrial cancers.

Its subcellular location is the nucleus. It localises to the cytoplasm. Functionally, cyclin-dependent kinase binding protein. Enhances cyclin-dependent kinase tyrosine phosphorylation by nonreceptor tyrosine kinases, such as that of CDK5 by activated ABL1, which leads to increased CDK5 activity and is critical for neuronal development, and that of CDK2 by WEE1, which leads to decreased CDK2 activity and growth inhibition. Positively affects neuronal outgrowth. Plays a role as a regulator for p53/p73-induced cell death. In Homo sapiens (Human), this protein is CDK5 and ABL1 enzyme substrate 1 (CABLES1).